Consider the following 137-residue polypeptide: MKQRTLSIIKPDALKKKVVGKIIDRFESNGLEVVAMKRLHLSVKDAENFYAIHRERPFFKDLIEFMVSGPVVVMVLEGEDAVAKNRDLMGATDPKLAQKGTIRADFAESIDANAVHGSDSLENAHNEIAFFFATRDL.

Positions 10, 58, 86, 92, 103, and 113 each coordinate ATP. His-116 acts as the Pros-phosphohistidine intermediate in catalysis.

It belongs to the NDK family. Homotetramer. Mg(2+) is required as a cofactor.

Its subcellular location is the cytoplasm. The catalysed reaction is a 2'-deoxyribonucleoside 5'-diphosphate + ATP = a 2'-deoxyribonucleoside 5'-triphosphate + ADP. It carries out the reaction a ribonucleoside 5'-diphosphate + ATP = a ribonucleoside 5'-triphosphate + ADP. Major role in the synthesis of nucleoside triphosphates other than ATP. The ATP gamma phosphate is transferred to the NDP beta phosphate via a ping-pong mechanism, using a phosphorylated active-site intermediate. This is Nucleoside diphosphate kinase from Helicobacter pylori (strain P12).